The sequence spans 341 residues: tRNA N6-adenosine threonylcarbamoyltransferase (341 aa).

2 residues coordinate Fe cation: His111 and His115. Substrate contacts are provided by residues 133-137 (AVSGG), Asp166, Gly179, Asp183, and Asn273. Asp301 is a binding site for Fe cation.

This sequence belongs to the KAE1 / TsaD family. It depends on Fe(2+) as a cofactor.

It localises to the cytoplasm. The enzyme catalyses L-threonylcarbamoyladenylate + adenosine(37) in tRNA = N(6)-L-threonylcarbamoyladenosine(37) in tRNA + AMP + H(+). Required for the formation of a threonylcarbamoyl group on adenosine at position 37 (t(6)A37) in tRNAs that read codons beginning with adenine. Is involved in the transfer of the threonylcarbamoyl moiety of threonylcarbamoyl-AMP (TC-AMP) to the N6 group of A37, together with TsaE and TsaB. TsaD likely plays a direct catalytic role in this reaction. The sequence is that of tRNA N6-adenosine threonylcarbamoyltransferase from Geobacter metallireducens (strain ATCC 53774 / DSM 7210 / GS-15).